The sequence spans 234 residues: Large ribosomal subunit protein uL1 (234 aa).

It belongs to the universal ribosomal protein uL1 family. As to quaternary structure, part of the 50S ribosomal subunit.

Functionally, binds directly to 23S rRNA. The L1 stalk is quite mobile in the ribosome, and is involved in E site tRNA release. In terms of biological role, protein L1 is also a translational repressor protein, it controls the translation of the L11 operon by binding to its mRNA. The sequence is that of Large ribosomal subunit protein uL1 from Escherichia coli O127:H6 (strain E2348/69 / EPEC).